A 131-amino-acid polypeptide reads, in one-letter code: Mediator of RNA polymerase II transcription subunit 31 (131 aa).

A2 is modified (N-acetylalanine).

The protein belongs to the Mediator complex subunit 31 family. Component of the Mediator complex, which is composed of MED1, MED4, MED6, MED7, MED8, MED9, MED10, MED11, MED12, MED13, MED13L, MED14, MED15, MED16, MED17, MED18, MED19, MED20, MED21, MED22, MED23, MED24, MED25, MED26, MED27, MED29, MED30, MED31, CCNC, CDK8 and CDC2L6/CDK11. The MED12, MED13, CCNC and CDK8 subunits form a distinct module termed the CDK8 module. Mediator containing the CDK8 module is less active than Mediator lacking this module in supporting transcriptional activation. Individual preparations of the Mediator complex lacking one or more distinct subunits have been variously termed ARC, CRSP, DRIP, PC2, SMCC and TRAP.

It localises to the nucleus. In terms of biological role, component of the Mediator complex, a coactivator involved in the regulated transcription of nearly all RNA polymerase II-dependent genes. Mediator functions as a bridge to convey information from gene-specific regulatory proteins to the basal RNA polymerase II transcription machinery. Mediator is recruited to promoters by direct interactions with regulatory proteins and serves as a scaffold for the assembly of a functional preinitiation complex with RNA polymerase II and the general transcription factors. The protein is Mediator of RNA polymerase II transcription subunit 31 (MED31) of Bos taurus (Bovine).